The chain runs to 199 residues: NADH-quinone oxidoreductase subunit C (199 aa).

It belongs to the complex I 30 kDa subunit family. As to quaternary structure, NDH-1 is composed of 14 different subunits. Subunits NuoB, C, D, E, F, and G constitute the peripheral sector of the complex.

Its subcellular location is the cell membrane. The enzyme catalyses a quinone + NADH + 5 H(+)(in) = a quinol + NAD(+) + 4 H(+)(out). Its function is as follows. NDH-1 shuttles electrons from NADH, via FMN and iron-sulfur (Fe-S) centers, to quinones in the respiratory chain. The immediate electron acceptor for the enzyme in this species is believed to be ubiquinone. Couples the redox reaction to proton translocation (for every two electrons transferred, four hydrogen ions are translocated across the cytoplasmic membrane), and thus conserves the redox energy in a proton gradient. The chain is NADH-quinone oxidoreductase subunit C from Polynucleobacter asymbioticus (strain DSM 18221 / CIP 109841 / QLW-P1DMWA-1) (Polynucleobacter necessarius subsp. asymbioticus).